Reading from the N-terminus, the 371-residue chain is Surface protein P12p (371 aa).

The N-terminal stretch at 1–20 (MHIVSFIIFFFALFFPISIC) is a signal peptide. 2 consecutive 6-Cys domains span residues 23–168 (INGV…LKKN) and 169–343 (ILYG…FSNQ). 4 disulfide bridges follow: Cys-27–Cys-62, Cys-76–Cys-144, Cys-93–Cys-142, and Cys-173–Cys-245. An N-linked (GlcNAc...) asparagine glycan is attached at Asn-184. Positions 202–239 (GNNNNDDDNNDDDNNNDNNNNDNNNNNNNNNNNNNNNN) are disordered. The segment covering 206–216 (NDDDNNDDDNN) has biased composition (acidic residues). Residues 217–239 (NDNNNNDNNNNNNNNNNNNNNNN) are compositionally biased toward low complexity. Residues Asn-242 and Asn-246 are each glycosylated (N-linked (GlcNAc...) asparagine). 2 disulfide bridges follow: Cys-260-Cys-323 and Cys-271-Cys-321.

It localises to the cell surface. The protein resides in the cell membrane. This is Surface protein P12p (PFS12P) from Plasmodium falciparum (isolate 3D7).